Reading from the N-terminus, the 165-residue chain is Peptide deformylase (165 aa).

Residues Cys88 and His130 each contribute to the Fe cation site. Glu131 is a catalytic residue. His134 serves as a coordination point for Fe cation.

The protein belongs to the polypeptide deformylase family. It depends on Fe(2+) as a cofactor.

The catalysed reaction is N-terminal N-formyl-L-methionyl-[peptide] + H2O = N-terminal L-methionyl-[peptide] + formate. Its function is as follows. Removes the formyl group from the N-terminal Met of newly synthesized proteins. Requires at least a dipeptide for an efficient rate of reaction. N-terminal L-methionine is a prerequisite for activity but the enzyme has broad specificity at other positions. This chain is Peptide deformylase, found in Borreliella burgdorferi (strain ATCC 35210 / DSM 4680 / CIP 102532 / B31) (Borrelia burgdorferi).